A 304-amino-acid polypeptide reads, in one-letter code: D-alanine--D-alanine ligase (304 aa).

Residues 99 to 293 (KKILRYEGIE…YSKLLDMIIE (195 aa)) enclose the ATP-grasp domain. 126-181 (LDKLGFPLVVKPNSGGSSVGVKIVYDKDELISMLETVFEWDSEVVIEKYIKGEEIT) is an ATP binding site. Mg(2+) contacts are provided by D248, E260, and N262.

The protein belongs to the D-alanine--D-alanine ligase family. It depends on Mg(2+) as a cofactor. The cofactor is Mn(2+).

It localises to the cytoplasm. The catalysed reaction is 2 D-alanine + ATP = D-alanyl-D-alanine + ADP + phosphate + H(+). It participates in cell wall biogenesis; peptidoglycan biosynthesis. Functionally, cell wall formation. This Bacillus anthracis (strain A0248) protein is D-alanine--D-alanine ligase.